The primary structure comprises 454 residues: Transmembrane GTPase fzo (454 aa).

In terms of domain architecture, Dynamin-type G spans 1–111; sequence SSMEPEMEQK…NQLKSTLISP (111 aa). Residues 1–322 are Cytoplasmic-facing; the sequence is SSMEPEMEQK…QMLESLVKSK (322 aa). Residues 30–33 are G5 motif; sequence YSTA. Serine 44 provides a ligand contact to GTP. A coiled-coil region spans residues 112–162; that stretch reads FIEKVSRLIDENKERRANLNAEIEEWELEMQDEREDLQYCFEELTEMTQRL. Residues 323-335 form a helical membrane-spanning segment; the sequence is GSLGTVLLGAMAI. The Mitochondrial intermembrane segment spans residues 336-338; sequence RSF. The helical transmembrane segment at 339-361 threads the bilayer; that stretch reads NWPIVMILGGLVGSFYMYEYAAW. At 362-454 the chain is on the cytoplasmic side; it reads TTAAQERSFK…DKGQLLASRL (93 aa). Positions 411 to 434 form a coiled coil; the sequence is QSNETLNDLNVRTAELTKQIQSME.

The protein belongs to the TRAFAC class dynamin-like GTPase superfamily. Dynamin/Fzo/YdjA family. Mitofusin subfamily.

It localises to the mitochondrion outer membrane. It catalyses the reaction GTP + H2O = GDP + phosphate + H(+). Essential transmembrane GTPase, which mediates mitochondrial fusion during spermatogenesis. In early spermatocytes, fusion of mitochondria give rise to two organelles named Nebenkern and constitutes an important step in mitochondria morphology, which is balanced between fusion and fission. Essential for fertility. This Drosophila simulans (Fruit fly) protein is Transmembrane GTPase fzo (fzo).